The following is a 290-amino-acid chain: 33 kDa chaperonin (290 aa).

2 cysteine pairs are disulfide-bonded: cysteine 235-cysteine 237 and cysteine 268-cysteine 271.

The protein belongs to the HSP33 family. In terms of processing, under oxidizing conditions two disulfide bonds are formed involving the reactive cysteines. Under reducing conditions zinc is bound to the reactive cysteines and the protein is inactive.

Its subcellular location is the cytoplasm. Functionally, redox regulated molecular chaperone. Protects both thermally unfolding and oxidatively damaged proteins from irreversible aggregation. Plays an important role in the bacterial defense system toward oxidative stress. This chain is 33 kDa chaperonin, found in Streptococcus equi subsp. zooepidemicus (strain H70).